A 498-amino-acid polypeptide reads, in one-letter code: ATP synthase subunit beta, chloroplastic (498 aa).

ATP is bound at residue 172 to 179; it reads GGAGVGKT.

This sequence belongs to the ATPase alpha/beta chains family. F-type ATPases have 2 components, CF(1) - the catalytic core - and CF(0) - the membrane proton channel. CF(1) has five subunits: alpha(3), beta(3), gamma(1), delta(1), epsilon(1). CF(0) has four main subunits: a(1), b(1), b'(1) and c(9-12).

The protein localises to the plastid. The protein resides in the chloroplast thylakoid membrane. The catalysed reaction is ATP + H2O + 4 H(+)(in) = ADP + phosphate + 5 H(+)(out). Its function is as follows. Produces ATP from ADP in the presence of a proton gradient across the membrane. The catalytic sites are hosted primarily by the beta subunits. The sequence is that of ATP synthase subunit beta, chloroplastic from Nypa fruticans (Nypa palm).